The following is a 318-amino-acid chain: Protoheme IX farnesyltransferase (318 aa).

9 helical membrane-spanning segments follow: residues 37 to 57 (VMEL…RGLP), 59 to 79 (IWLI…AGAF), 108 to 128 (EALV…WFGA), 131 to 151 (LAGL…TLIL), 158 to 178 (NIVW…AAVT), 183 to 203 (WPAI…YWPL), 216 to 238 (VPML…YTWA), 249 to 269 (LGHA…WFLL), and 296 to 316 (ISYL…GMPL).

Belongs to the UbiA prenyltransferase family. Protoheme IX farnesyltransferase subfamily.

The protein localises to the cell membrane. It catalyses the reaction heme b + (2E,6E)-farnesyl diphosphate + H2O = Fe(II)-heme o + diphosphate. Its pathway is porphyrin-containing compound metabolism; heme O biosynthesis; heme O from protoheme: step 1/1. Its function is as follows. Converts heme B (protoheme IX) to heme O by substitution of the vinyl group on carbon 2 of heme B porphyrin ring with a hydroxyethyl farnesyl side group. This chain is Protoheme IX farnesyltransferase, found in Renibacterium salmoninarum (strain ATCC 33209 / DSM 20767 / JCM 11484 / NBRC 15589 / NCIMB 2235).